Here is a 130-residue protein sequence, read N- to C-terminus: Small ribosomal subunit protein uS11 (130 aa).

Belongs to the universal ribosomal protein uS11 family. In terms of assembly, part of the 30S ribosomal subunit. Interacts with proteins S7 and S18. Binds to IF-3.

Functionally, located on the platform of the 30S subunit, it bridges several disparate RNA helices of the 16S rRNA. Forms part of the Shine-Dalgarno cleft in the 70S ribosome. The chain is Small ribosomal subunit protein uS11 from Prochlorococcus marinus (strain MIT 9313).